A 65-amino-acid chain; its full sequence is Small ribosomal subunit protein bS21 (65 aa).

The disordered stretch occupies residues 44–65; sequence DDRLKRSRGKRRAQRANEERNS. Residues 48-57 show a composition bias toward basic residues; sequence KRSRGKRRAQ.

This sequence belongs to the bacterial ribosomal protein bS21 family.

This is Small ribosomal subunit protein bS21 from Prosthecochloris aestuarii (strain DSM 271 / SK 413).